The sequence spans 875 residues: Neurotrypsin (875 aa).

A signal peptide spans 1–20; it reads MTLARFALALLFGVLPEVVG. Asn-26 is a glycosylation site (N-linked (GlcNAc...) asparagine). The tract at residues 51–72 is disordered; sequence QRHRRTRPPPPLPRFPRPPRAL. The span at 58-71 shows a compositional bias: pro residues; the sequence is PPPPLPRFPRPPRA. The Kringle domain occupies 93–165; that stretch reads CPAGEPWVSV…GKVDWGYCDC (73 aa). Disulfide bonds link Cys-93/Cys-165, Cys-109/Cys-149, Cys-138/Cys-163, Cys-195/Cys-259, Cys-208/Cys-269, Cys-239/Cys-249, Cys-305/Cys-369, Cys-318/Cys-379, Cys-349/Cys-359, Cys-412/Cys-475, Cys-425/Cys-485, Cys-455/Cys-465, Cys-525/Cys-589, Cys-538/Cys-599, Cys-569/Cys-579, Cys-619/Cys-750, Cys-661/Cys-677, Cys-765/Cys-831, Cys-794/Cys-808, and Cys-821/Cys-850. 4 SRCR domains span residues 170–271, 280–381, 387–487, and 500–601; these read VRLR…MCSF, IRLV…SCTP, IRLA…ACYP, and VRLM…ICDY. The zymogen activation region stretch occupies residues 619 to 630; that stretch reads CGLRLLHRRQKR. Residues 631–874 form the Peptidase S1 domain; sequence IIGGKNSLRG…FVPWIKSVTK (244 aa). His-676 (charge relay system) is an active-site residue. A glycan (N-linked (GlcNAc...) asparagine) is linked at Asn-683. Asp-726 serves as the catalytic Charge relay system. The Charge relay system role is filled by Ser-825.

Belongs to the peptidase S1 family.

It is found in the secreted. In terms of biological role, plays a role in neuronal plasticity and the proteolytic action may subserve structural reorganizations associated with learning and memory operations. This is Neurotrypsin (PRSS12) from Saguinus labiatus (Red-chested mustached tamarin).